Reading from the N-terminus, the 130-residue chain is Small ribosomal subunit protein uS9 (130 aa).

The span at 105–115 shows a compositional bias: basic and acidic residues; it reads TRDSRQVERKK. Residues 105–130 form a disordered region; that stretch reads TRDSRQVERKKVGFRKSRKRTQFSKR. A compositionally biased stretch (basic residues) spans 116–130; it reads VGFRKSRKRTQFSKR.

Belongs to the universal ribosomal protein uS9 family.

The polypeptide is Small ribosomal subunit protein uS9 (Buchnera aphidicola subsp. Schizaphis graminum (strain Sg)).